We begin with the raw amino-acid sequence, 95 residues long: Large ribosomal subunit protein uL23 (95 aa).

It belongs to the universal ribosomal protein uL23 family. Part of the 50S ribosomal subunit. Contacts protein L29, and trigger factor when it is bound to the ribosome.

Its function is as follows. One of the early assembly proteins it binds 23S rRNA. One of the proteins that surrounds the polypeptide exit tunnel on the outside of the ribosome. Forms the main docking site for trigger factor binding to the ribosome. The chain is Large ribosomal subunit protein uL23 from Coxiella burnetii (strain CbuK_Q154) (Coxiella burnetii (strain Q154)).